The following is a 443-amino-acid chain: Ribulose bisphosphate carboxylase large chain (443 aa).

Asn89 and Thr139 together coordinate substrate. Catalysis depends on Lys141, which acts as the Proton acceptor. Position 143 (Lys143) interacts with substrate. Lys167, Asp169, and Glu170 together coordinate Mg(2+). N6-carboxylysine is present on Lys167. Catalysis depends on His260, which acts as the Proton acceptor. Substrate contacts are provided by Arg261, His293, and Ser345.

This sequence belongs to the RuBisCO large chain family. Type I subfamily. As to quaternary structure, heterohexadecamer of 8 large chains and 8 small chains; disulfide-linked. The disulfide link is formed within the large subunit homodimers. It depends on Mg(2+) as a cofactor. In terms of processing, the disulfide bond which can form in the large chain dimeric partners within the hexadecamer appears to be associated with oxidative stress and protein turnover.

Its subcellular location is the plastid. It localises to the chloroplast. It catalyses the reaction 2 (2R)-3-phosphoglycerate + 2 H(+) = D-ribulose 1,5-bisphosphate + CO2 + H2O. The enzyme catalyses D-ribulose 1,5-bisphosphate + O2 = 2-phosphoglycolate + (2R)-3-phosphoglycerate + 2 H(+). In terms of biological role, ruBisCO catalyzes two reactions: the carboxylation of D-ribulose 1,5-bisphosphate, the primary event in carbon dioxide fixation, as well as the oxidative fragmentation of the pentose substrate in the photorespiration process. Both reactions occur simultaneously and in competition at the same active site. The sequence is that of Ribulose bisphosphate carboxylase large chain from Verbena bonariensis (Argentinian vervain).